A 249-amino-acid chain; its full sequence is MSFIAIIPARYASTRLPGKPLADIHGKPMVVHVMERARESGASRVIVATDHPAVAEAVKAAGGEVCMTRADHNSGTERLAEVIEHYGFADDEIIVNVQGDEPLIPPVIVRQVAENLAGSQAGMATLAVPIESAEEAFNPNAVKVVMDAQGYALYFSRATIPWDRERFAQSKESIGDSLLRHIGIYAYRAGFVRRYVTWAPSQLEQIELLEQLRVLWYGEKIHVAVAKAMPTVGVDTQEDLQRVRDSIKG.

Belongs to the KdsB family.

It localises to the cytoplasm. It carries out the reaction 3-deoxy-alpha-D-manno-oct-2-ulosonate + CTP = CMP-3-deoxy-beta-D-manno-octulosonate + diphosphate. The protein operates within nucleotide-sugar biosynthesis; CMP-3-deoxy-D-manno-octulosonate biosynthesis; CMP-3-deoxy-D-manno-octulosonate from 3-deoxy-D-manno-octulosonate and CTP: step 1/1. It participates in bacterial outer membrane biogenesis; lipopolysaccharide biosynthesis. Functionally, activates KDO (a required 8-carbon sugar) for incorporation into bacterial lipopolysaccharide in Gram-negative bacteria. This is 3-deoxy-manno-octulosonate cytidylyltransferase from Serratia proteamaculans (strain 568).